A 312-amino-acid chain; its full sequence is Uracil-DNA glycosylase (312 aa).

The span at 1 to 11 (MSSACDHETEA) shows a compositional bias: basic and acidic residues. The segment at 1-61 (MSSACDHETE…PPKRRRPCGL (61 aa)) is disordered. Residues 22 to 33 (EENGSNSSTPTS) are compositionally biased toward polar residues. Asp155 (proton acceptor) is an active-site residue.

This sequence belongs to the uracil-DNA glycosylase (UDG) superfamily. UNG family.

It localises to the host nucleus. It carries out the reaction Hydrolyzes single-stranded DNA or mismatched double-stranded DNA and polynucleotides, releasing free uracil.. In terms of biological role, excises uracil residues from the DNA which can arise as a result of misincorporation of dUMP residues by DNA polymerase or deamination of cytosines. Therefore may reduce deleterious uracil incorporation into the viral genome, particularly in terminally differentiated cells which lack DNA repair enzymes. In Equine herpesvirus 1 (strain V592) (EHV-1), this protein is Uracil-DNA glycosylase (61).